The sequence spans 117 residues: Large ribosomal subunit protein uL18 (117 aa).

It belongs to the universal ribosomal protein uL18 family. In terms of assembly, part of the 50S ribosomal subunit; part of the 5S rRNA/L5/L18/L25 subcomplex. Contacts the 5S and 23S rRNAs.

This is one of the proteins that bind and probably mediate the attachment of the 5S RNA into the large ribosomal subunit, where it forms part of the central protuberance. The sequence is that of Large ribosomal subunit protein uL18 from Haemophilus ducreyi (strain 35000HP / ATCC 700724).